Here is a 461-residue protein sequence, read N- to C-terminus: Cysteine--tRNA ligase (461 aa).

Cysteine 28 provides a ligand contact to Zn(2+). The 'HIGH' region signature appears at isoleucine 30 to histidine 40. Residues cysteine 209, histidine 234, and glutamate 238 each contribute to the Zn(2+) site. The 'KMSKS' region motif lies at lysine 266–serine 270. Lysine 269 is a binding site for ATP.

This sequence belongs to the class-I aminoacyl-tRNA synthetase family. As to quaternary structure, monomer. Requires Zn(2+) as cofactor.

It is found in the cytoplasm. The catalysed reaction is tRNA(Cys) + L-cysteine + ATP = L-cysteinyl-tRNA(Cys) + AMP + diphosphate. The protein is Cysteine--tRNA ligase of Yersinia pestis bv. Antiqua (strain Antiqua).